Reading from the N-terminus, the 203-residue chain is Large ribosomal subunit protein uL13 (203 aa).

A2 is subject to N-acetylalanine. Position 59 is a citrulline (R59). Position 77 is a phosphoserine (S77). Residue R140 is modified to Citrulline. K191 carries the post-translational modification N6-acetyllysine.

The protein belongs to the universal ribosomal protein uL13 family. Component of the 60S ribosome. Component of the GAIT complex. Interacts with EIF4G1. Phosphorylation at Ser-77 upon interferon-gamma treatment in macrophages involves a DAPK1-DAPK3 kinase cascade and is causing release from the ribosome, association with the GAIT complex and subsequent involvement in transcript-selective translation inhibition. Post-translationally, citrullinated by PADI4.

The protein localises to the cytoplasm. Its function is as follows. Associated with ribosomes but is not required for canonical ribosome function and has extra-ribosomal functions. Component of the GAIT (gamma interferon-activated inhibitor of translation) complex which mediates interferon-gamma-induced transcript-selective translation inhibition in inflammation processes. Upon interferon-gamma activation and subsequent phosphorylation dissociates from the ribosome and assembles into the GAIT complex which binds to stem loop-containing GAIT elements in the 3'-UTR of diverse inflammatory mRNAs (such as ceruplasmin) and suppresses their translation. In the GAIT complex interacts with m7G cap-bound eIF4G at or near the eIF3-binding site and blocks the recruitment of the 43S ribosomal complex. Involved in methylation of rRNA. The chain is Large ribosomal subunit protein uL13 (RPL13A) from Canis lupus familiaris (Dog).